The primary structure comprises 98 residues: NADH-ubiquinone oxidoreductase chain 4L (98 aa).

The next 3 membrane-spanning stretches (helical) occupy residues M1–M21, S29–L49, and I61–V81.

Belongs to the complex I subunit 4L family. As to quaternary structure, core subunit of respiratory chain NADH dehydrogenase (Complex I) which is composed of 45 different subunits.

Its subcellular location is the mitochondrion inner membrane. It carries out the reaction a ubiquinone + NADH + 5 H(+)(in) = a ubiquinol + NAD(+) + 4 H(+)(out). In terms of biological role, core subunit of the mitochondrial membrane respiratory chain NADH dehydrogenase (Complex I) which catalyzes electron transfer from NADH through the respiratory chain, using ubiquinone as an electron acceptor. Part of the enzyme membrane arm which is embedded in the lipid bilayer and involved in proton translocation. This chain is NADH-ubiquinone oxidoreductase chain 4L (MT-ND4L), found in Ommatophoca rossii (Ross seal).